A 400-amino-acid polypeptide reads, in one-letter code: Argininosuccinate synthase (400 aa).

ATP contacts are provided by residues Ala-10–Ser-18 and Ala-38. Tyr-89 is a binding site for L-citrulline. Residue Gly-119 coordinates ATP. Residues Thr-121, Asn-125, and Asp-126 each contribute to the L-aspartate site. An L-citrulline-binding site is contributed by Asn-125. L-citrulline-binding residues include Arg-129, Ser-177, Ser-186, Glu-262, and Tyr-274.

This sequence belongs to the argininosuccinate synthase family. Type 1 subfamily. In terms of assembly, homotetramer.

It localises to the cytoplasm. The catalysed reaction is L-citrulline + L-aspartate + ATP = 2-(N(omega)-L-arginino)succinate + AMP + diphosphate + H(+). It functions in the pathway amino-acid biosynthesis; L-arginine biosynthesis; L-arginine from L-ornithine and carbamoyl phosphate: step 2/3. The sequence is that of Argininosuccinate synthase from Nostoc sp. (strain PCC 7120 / SAG 25.82 / UTEX 2576).